A 188-amino-acid polypeptide reads, in one-letter code: ATP-dependent protease subunit HslV (188 aa).

The active site involves T7. Na(+) contacts are provided by G162, C165, and S168.

This sequence belongs to the peptidase T1B family. HslV subfamily. As to quaternary structure, a double ring-shaped homohexamer of HslV is capped on each side by a ring-shaped HslU homohexamer. The assembly of the HslU/HslV complex is dependent on binding of ATP.

Its subcellular location is the cytoplasm. The catalysed reaction is ATP-dependent cleavage of peptide bonds with broad specificity.. Allosterically activated by HslU binding. In terms of biological role, protease subunit of a proteasome-like degradation complex believed to be a general protein degrading machinery. The chain is ATP-dependent protease subunit HslV from Thiobacillus denitrificans (strain ATCC 25259 / T1).